The chain runs to 652 residues: Transmembrane 9 superfamily member 12 (652 aa).

A signal peptide spans 1–20; that stretch reads MFGVYRVFVLLVFVSQLCNG. The Lumenal segment spans residues 21 to 286; sequence FYLPGSYMHT…LKMEGARVHW (266 aa). The chain crosses the membrane as a helical span at residues 287–307; it reads FSILNSLMVIFFLAGIVFVIF. Over 308 to 362 the chain is Cytoplasmic; it reads LRTVRRDLTKYEELDKEAQAQMNEELSGWKLVVGDVFREPEMSKLLCIMVGDGVR. Residues 363-383 form a helical membrane-spanning segment; it reads ITGMAVVTIVFAALGFMSPAS. Topologically, residues 384-386 are lumenal; sequence RGM. The chain crosses the membrane as a helical span at residues 387–407; sequence LLTGMIILYLFLGIVAGYAGV. Topologically, residues 408-426 are cytoplasmic; sequence RLWRTVKGTSEGWRSLSWS. A helical transmembrane segment spans residues 427–447; the sequence is IACFFPGIAFVILTVLNFLLW. Residues 448-460 lie on the Lumenal side of the membrane; sequence SSNSTGAIPISLY. Residues 461–481 form a helical membrane-spanning segment; that stretch reads FELLALWFCISVPLTLFGGFL. Residues 482 to 510 are Cytoplasmic-facing; it reads GTRAEAIQFPVRTNQIPREIPERKYPSWL. Residues 511-531 form a helical membrane-spanning segment; sequence LVLGAGTLPFGTLFIELFFIF. Topologically, residues 532–541 are lumenal; sequence SSIWLGRFYY. Residues 542–562 traverse the membrane as a helical segment; that stretch reads VFGFLLIVLLLLVVVCAEVSV. The Cytoplasmic segment spans residues 563–580; that stretch reads VLTYMHLCVEDWRWWWKA. The chain crosses the membrane as a helical span at residues 581-601; that stretch reads FYASGSVALYVFAYSINYLVF. At 602 to 613 the chain is on the lumenal side; it reads DLQSLSGPVSAM. Residues 614-634 traverse the membrane as a helical segment; sequence LYIGYSLLMAIAIMLATGTIG. Over 635–652 the chain is Cytoplasmic; sequence FLTSFYFVHYLFSSVKID. The short motif at 641 to 646 is the Endoplasmic reticulum export signal element; it reads FVHYLF. A Golgi retention signal motif is present at residues 650–652; it reads KID.

It belongs to the nonaspanin (TM9SF) (TC 9.A.2) family.

The protein resides in the endosome membrane. It localises to the golgi apparatus membrane. In Arabidopsis thaliana (Mouse-ear cress), this protein is Transmembrane 9 superfamily member 12.